The primary structure comprises 236 residues: 3-deoxy-D-manno-octulosonic acid kinase (236 aa).

The active site involves D167.

It belongs to the protein kinase superfamily. KdkA/RfaP family.

It is found in the cell inner membrane. It carries out the reaction an alpha-Kdo-(2-&gt;6)-lipid IVA + ATP = a 4-O-phospho-alpha-Kdo-(2-&gt;6)-lipid IVA + ADP + H(+). It participates in bacterial outer membrane biogenesis; LPS core biosynthesis. In terms of biological role, catalyzes the ATP-dependent phosphorylation of the 3-deoxy-D-manno-octulosonic acid (Kdo) residue in Kdo-lipid IV(A) at the 4-OH position. This Vibrio vulnificus (strain YJ016) protein is 3-deoxy-D-manno-octulosonic acid kinase.